The sequence spans 155 residues: Transcriptional repressor NrdR (155 aa).

Residues 3 to 34 (CPFCHAEETKVVDSRLVADGAQVRRRRECLEC) fold into a zinc finger. The ATP-cone domain occupies 49 to 139 (PLIIKRDGRR…VYKRFKDVSD (91 aa)).

The protein belongs to the NrdR family. The cofactor is Zn(2+).

Negatively regulates transcription of bacterial ribonucleotide reductase nrd genes and operons by binding to NrdR-boxes. The sequence is that of Transcriptional repressor NrdR from Legionella pneumophila (strain Lens).